The following is a 572-amino-acid chain: Proline--tRNA ligase (572 aa).

This sequence belongs to the class-II aminoacyl-tRNA synthetase family. ProS type 1 subfamily. Homodimer.

The protein localises to the cytoplasm. It carries out the reaction tRNA(Pro) + L-proline + ATP = L-prolyl-tRNA(Pro) + AMP + diphosphate. Its function is as follows. Catalyzes the attachment of proline to tRNA(Pro) in a two-step reaction: proline is first activated by ATP to form Pro-AMP and then transferred to the acceptor end of tRNA(Pro). As ProRS can inadvertently accommodate and process non-cognate amino acids such as alanine and cysteine, to avoid such errors it has two additional distinct editing activities against alanine. One activity is designated as 'pretransfer' editing and involves the tRNA(Pro)-independent hydrolysis of activated Ala-AMP. The other activity is designated 'posttransfer' editing and involves deacylation of mischarged Ala-tRNA(Pro). The misacylated Cys-tRNA(Pro) is not edited by ProRS. The sequence is that of Proline--tRNA ligase from Yersinia pseudotuberculosis serotype IB (strain PB1/+).